Reading from the N-terminus, the 172-residue chain is Crossover junction endodeoxyribonuclease RuvC (172 aa).

Residues Asp-12, Glu-71, and Asp-143 contribute to the active site. Residues Asp-12, Glu-71, and Asp-143 each coordinate Mg(2+).

The protein belongs to the RuvC family. As to quaternary structure, homodimer which binds Holliday junction (HJ) DNA. The HJ becomes 2-fold symmetrical on binding to RuvC with unstacked arms; it has a different conformation from HJ DNA in complex with RuvA. In the full resolvosome a probable DNA-RuvA(4)-RuvB(12)-RuvC(2) complex forms which resolves the HJ. Mg(2+) is required as a cofactor.

Its subcellular location is the cytoplasm. The enzyme catalyses Endonucleolytic cleavage at a junction such as a reciprocal single-stranded crossover between two homologous DNA duplexes (Holliday junction).. Functionally, the RuvA-RuvB-RuvC complex processes Holliday junction (HJ) DNA during genetic recombination and DNA repair. Endonuclease that resolves HJ intermediates. Cleaves cruciform DNA by making single-stranded nicks across the HJ at symmetrical positions within the homologous arms, yielding a 5'-phosphate and a 3'-hydroxyl group; requires a central core of homology in the junction. The consensus cleavage sequence is 5'-(A/T)TT(C/G)-3'. Cleavage occurs on the 3'-side of the TT dinucleotide at the point of strand exchange. HJ branch migration catalyzed by RuvA-RuvB allows RuvC to scan DNA until it finds its consensus sequence, where it cleaves and resolves the cruciform DNA. In Coxiella burnetii (strain CbuK_Q154) (Coxiella burnetii (strain Q154)), this protein is Crossover junction endodeoxyribonuclease RuvC.